The following is a 311-amino-acid chain: Dehydrogenase/reductase SDR family member 7C (311 aa).

The signal sequence occupies residues 1–18 (MGVTAVLMLPLLLLGISG). NAD(+) contacts are provided by Ser47, Leu49, Tyr191, Lys195, and Ser226. Tyr191 serves as the catalytic Proton acceptor.

It belongs to the short-chain dehydrogenases/reductases (SDR) family.

The protein localises to the sarcoplasmic reticulum membrane. It catalyses the reaction all-trans-retinol + NAD(+) = all-trans-retinal + NADH + H(+). NADH-dependent oxidoreductase which catalyzes the oxidation of all-trans-retinol to all-trans-retinal. Plays a role in the regulation of cardiac and skeletal muscle metabolic functions. Maintains Ca(2+) intracellular homeostasis by repressing Ca(2+) release from the sarcoplasmic reticulum (SR) in myotubes, possibly through local alternations in NAD/NADH or retinol/retinal. Also plays a role in Ca(2+) homeostasis by controlling Ca(2+) overload in the cytosol and the SR in myotubes. Involved in glucose uptake into skeletal muscles and muscle performance by activating PI3K and mTORC2-mediated AKT1 phosphorylation signaling pathways, possibly through the action of its downstream catalytic product all-trans-retinoic acid. The chain is Dehydrogenase/reductase SDR family member 7C (DHRS7C) from Bos taurus (Bovine).